Here is a 945-residue protein sequence, read N- to C-terminus: UvrABC system protein A (945 aa).

31–38 lines the ATP pocket; it reads GLSGSGKS. Residues 254-281 form a C4-type zinc finger; the sequence is CPVCGHSISELEPKLFSFNNPAGACPTC. 2 ABC transporter domains span residues 310-587 and 607-937; these read WDRR…PDSL and RDKK…HFLK. Position 640–647 (640–647) interacts with ATP; that stretch reads GVSGSGKS. Residues 740-766 form a C4-type zinc finger; the sequence is CEACQGDGVIKVEMHFLPDIYVPCDVC.

It belongs to the ABC transporter superfamily. UvrA family. As to quaternary structure, forms a heterotetramer with UvrB during the search for lesions.

It is found in the cytoplasm. Its function is as follows. The UvrABC repair system catalyzes the recognition and processing of DNA lesions. UvrA is an ATPase and a DNA-binding protein. A damage recognition complex composed of 2 UvrA and 2 UvrB subunits scans DNA for abnormalities. When the presence of a lesion has been verified by UvrB, the UvrA molecules dissociate. The polypeptide is UvrABC system protein A (Pseudomonas aeruginosa (strain ATCC 15692 / DSM 22644 / CIP 104116 / JCM 14847 / LMG 12228 / 1C / PRS 101 / PAO1)).